Consider the following 200-residue polypeptide: Mediator of RNA polymerase II transcription subunit 29 (200 aa).

2 stretches are compositionally biased toward low complexity: residues 1–20 (MAAS…VSGP) and 36–48 (AQLV…GLLQ). The disordered stretch occupies residues 1-48 (MAASQQQASATTSTASVSGPGSAGGSGPQQQPQPPAQLVGPAQSGLLQ). Ala-2 carries the post-translational modification N-acetylalanine.

It belongs to the Mediator complex subunit 29 family. As to quaternary structure, component of the TRAP/SMCC mediator complex. Interacts with MED20/TRFP. Associates with the MED18-MED20 heteromer.

Its subcellular location is the nucleus. Functionally, component of the mediator complex, a complex that can either repress or activate transcription. Mediator complexes are essential for basal and regulated expression of nearly all RNA polymerase II-dependent genes. They may act as a bridge, conveying regulatory information from enhancers and other control elements to the promoter. The chain is Mediator of RNA polymerase II transcription subunit 29 (MED29) from Bos taurus (Bovine).